The primary structure comprises 210 residues: Ribonuclease HII (210 aa).

An RNase H type-2 domain is found at 18 to 210 (GLIAGVDEVG…FKPVKALLGL (193 aa)). A divalent metal cation contacts are provided by Asp24, Glu25, and Asp116.

It belongs to the RNase HII family. Mn(2+) serves as cofactor. Requires Mg(2+) as cofactor.

The protein resides in the cytoplasm. It catalyses the reaction Endonucleolytic cleavage to 5'-phosphomonoester.. Its function is as follows. Endonuclease that specifically degrades the RNA of RNA-DNA hybrids. The sequence is that of Ribonuclease HII from Shewanella baltica (strain OS155 / ATCC BAA-1091).